The primary structure comprises 312 residues: Ribosomal protein L11 methyltransferase (312 aa).

Positions 160, 181, 203, and 246 each coordinate S-adenosyl-L-methionine.

Belongs to the methyltransferase superfamily. PrmA family.

It localises to the cytoplasm. The enzyme catalyses L-lysyl-[protein] + 3 S-adenosyl-L-methionine = N(6),N(6),N(6)-trimethyl-L-lysyl-[protein] + 3 S-adenosyl-L-homocysteine + 3 H(+). Methylates ribosomal protein L11. This is Ribosomal protein L11 methyltransferase from Staphylococcus epidermidis (strain ATCC 12228 / FDA PCI 1200).